We begin with the raw amino-acid sequence, 225 residues long: Ribosomal RNA small subunit methyltransferase G (225 aa).

S-adenosyl-L-methionine is bound by residues Gly-96, Phe-101, 146-147, and Arg-160; that span reads AE.

This sequence belongs to the methyltransferase superfamily. RNA methyltransferase RsmG family.

The protein resides in the cytoplasm. Its function is as follows. Specifically methylates the N7 position of a guanine in 16S rRNA. The protein is Ribosomal RNA small subunit methyltransferase G of Mycoplasma mobile (strain ATCC 43663 / 163K / NCTC 11711) (Mesomycoplasma mobile).